Here is a 471-residue protein sequence, read N- to C-terminus: Tryptophanase (471 aa).

K256 bears the N6-(pyridoxal phosphate)lysine mark.

It belongs to the beta-eliminating lyase family. As to quaternary structure, homotetramer. Requires pyridoxal 5'-phosphate as cofactor.

It catalyses the reaction L-tryptophan + H2O = indole + pyruvate + NH4(+). Its pathway is amino-acid degradation; L-tryptophan degradation via pyruvate pathway; indole and pyruvate from L-tryptophan: step 1/1. This is Tryptophanase from Salinibacter ruber (strain DSM 13855 / M31).